Consider the following 1317-residue polypeptide: DNA-directed RNA polymerase subunit beta' (1317 aa).

The Zn(2+) site is built by Cys-214, Cys-286, Cys-293, and Cys-296. Residues 1279-1317 are disordered; it reads RAYAGTQLSQDDEEFEETYDTDEDDFDMDDDDDFGDDED. Residues 1288–1317 are compositionally biased toward acidic residues; sequence QDDEEFEETYDTDEDDFDMDDDDDFGDDED.

Belongs to the RNA polymerase beta' chain family. RpoC2 subfamily. In cyanobacteria the RNAP catalytic core is composed of 2 alpha, 1 beta, 1 beta', 1 gamma and 1 omega subunit. When a sigma factor is associated with the core the holoenzyme is formed, which can initiate transcription. Zn(2+) serves as cofactor.

It catalyses the reaction RNA(n) + a ribonucleoside 5'-triphosphate = RNA(n+1) + diphosphate. Its function is as follows. DNA-dependent RNA polymerase catalyzes the transcription of DNA into RNA using the four ribonucleoside triphosphates as substrates. This Synechocystis sp. (strain ATCC 27184 / PCC 6803 / Kazusa) protein is DNA-directed RNA polymerase subunit beta'.